A 343-amino-acid polypeptide reads, in one-letter code: Holliday junction branch migration complex subunit RuvB (343 aa).

The segment at 4 to 193 (TDNLTAAQPQ…FGIVSRLEFY (190 aa)) is large ATPase domain (RuvB-L). Residues leucine 32, arginine 33, glycine 74, lysine 77, threonine 78, threonine 79, 140-142 (EDY), arginine 183, tyrosine 193, and arginine 230 each bind ATP. Residue threonine 78 coordinates Mg(2+). Residues 194 to 264 (ENRDLATIVS…IADAALSMLD (71 aa)) form a small ATPAse domain (RuvB-S) region. Residues 267–343 (VQGLDVMDRK…YLHFGLPVEK (77 aa)) form a head domain (RuvB-H) region. Arginine 322 and arginine 327 together coordinate DNA.

Belongs to the RuvB family. In terms of assembly, homohexamer. Forms an RuvA(8)-RuvB(12)-Holliday junction (HJ) complex. HJ DNA is sandwiched between 2 RuvA tetramers; dsDNA enters through RuvA and exits via RuvB. An RuvB hexamer assembles on each DNA strand where it exits the tetramer. Each RuvB hexamer is contacted by two RuvA subunits (via domain III) on 2 adjacent RuvB subunits; this complex drives branch migration. In the full resolvosome a probable DNA-RuvA(4)-RuvB(12)-RuvC(2) complex forms which resolves the HJ.

Its subcellular location is the cytoplasm. The enzyme catalyses ATP + H2O = ADP + phosphate + H(+). The RuvA-RuvB-RuvC complex processes Holliday junction (HJ) DNA during genetic recombination and DNA repair, while the RuvA-RuvB complex plays an important role in the rescue of blocked DNA replication forks via replication fork reversal (RFR). RuvA specifically binds to HJ cruciform DNA, conferring on it an open structure. The RuvB hexamer acts as an ATP-dependent pump, pulling dsDNA into and through the RuvAB complex. RuvB forms 2 homohexamers on either side of HJ DNA bound by 1 or 2 RuvA tetramers; 4 subunits per hexamer contact DNA at a time. Coordinated motions by a converter formed by DNA-disengaged RuvB subunits stimulates ATP hydrolysis and nucleotide exchange. Immobilization of the converter enables RuvB to convert the ATP-contained energy into a lever motion, pulling 2 nucleotides of DNA out of the RuvA tetramer per ATP hydrolyzed, thus driving DNA branch migration. The RuvB motors rotate together with the DNA substrate, which together with the progressing nucleotide cycle form the mechanistic basis for DNA recombination by continuous HJ branch migration. Branch migration allows RuvC to scan DNA until it finds its consensus sequence, where it cleaves and resolves cruciform DNA. This is Holliday junction branch migration complex subunit RuvB from Neisseria meningitidis serogroup A / serotype 4A (strain DSM 15465 / Z2491).